We begin with the raw amino-acid sequence, 358 residues long: Peptide chain release factor 1 (358 aa).

Gln-233 carries the post-translational modification N5-methylglutamine.

Belongs to the prokaryotic/mitochondrial release factor family. Methylated by PrmC. Methylation increases the termination efficiency of RF1.

It localises to the cytoplasm. Peptide chain release factor 1 directs the termination of translation in response to the peptide chain termination codons UAG and UAA. In Staphylococcus aureus (strain MSSA476), this protein is Peptide chain release factor 1.